Consider the following 307-residue polypeptide: Regulating synaptic membrane exocytosis protein 3 (307 aa).

The disordered stretch occupies residues 86–120; sequence STETGIAVEMRSRVTRQGSRESTDGSTNSNSSEGT. Polar residues predominate over residues 109–119; sequence DGSTNSNSSEG. Positions 155–273 constitute a C2 domain; it reads PMGDVHIAIM…DLSAVVTGWY (119 aa). A phosphoserine mark is found at S294 and S297.

In terms of assembly, binds PPFIA3. Does not bind RAB3. As to expression, expressed exclusively in brain with significant levels in cortex, cerebellum and olfactory bulb. Detected at lower level in hippocampus.

The protein localises to the synapse. In terms of biological role, regulates synaptic membrane exocytosis. The protein is Regulating synaptic membrane exocytosis protein 3 (Rims3) of Rattus norvegicus (Rat).